The primary structure comprises 398 residues: Phosphoglycerate kinase (398 aa).

Residues 21–23 (DFN), Arg36, 59–62 (HLGR), Arg119, and Arg157 each bind substrate. ATP contacts are provided by residues Lys208, Gly296, Glu327, and 354-357 (GGDS).

This sequence belongs to the phosphoglycerate kinase family. In terms of assembly, monomer.

The protein localises to the cytoplasm. The catalysed reaction is (2R)-3-phosphoglycerate + ATP = (2R)-3-phospho-glyceroyl phosphate + ADP. It participates in carbohydrate degradation; glycolysis; pyruvate from D-glyceraldehyde 3-phosphate: step 2/5. The protein is Phosphoglycerate kinase (pgk) of Lactococcus lactis subsp. lactis (strain IL1403) (Streptococcus lactis).